Consider the following 444-residue polypeptide: Cobyrinate a,c-diamide synthase (444 aa).

In terms of domain architecture, GATase cobBQ-type spans 250-438 (IIAIAQDRAF…PHIHFFGSYK (189 aa)). Catalysis depends on Cys-332, which acts as the Nucleophile.

The protein belongs to the CobB/CbiA family. Mg(2+) serves as cofactor.

The enzyme catalyses cob(II)yrinate + 2 L-glutamine + 2 ATP + 2 H2O = cob(II)yrinate a,c diamide + 2 L-glutamate + 2 ADP + 2 phosphate + 2 H(+). It functions in the pathway cofactor biosynthesis; adenosylcobalamin biosynthesis; cob(II)yrinate a,c-diamide from sirohydrochlorin (anaerobic route): step 10/10. In terms of biological role, catalyzes the ATP-dependent amidation of the two carboxylate groups at positions a and c of cobyrinate, using either L-glutamine or ammonia as the nitrogen source. The chain is Cobyrinate a,c-diamide synthase from Fusobacterium nucleatum subsp. nucleatum (strain ATCC 25586 / DSM 15643 / BCRC 10681 / CIP 101130 / JCM 8532 / KCTC 2640 / LMG 13131 / VPI 4355).